The chain runs to 369 residues: Putative FAD-dependent oxidoreductase LodB (369 aa).

Residues 10–14 (GGGPA) and Arg103 contribute to the FAD site.

FAD is required as a cofactor.

The protein localises to the cytoplasm. Functionally, is required for lysine-epsilon oxidase (LOD) activity in M.mediterranea. May be involved in the generation of the quinonic cofactor of LodA, leading to the active form of LodA containing a tyrosine-derived quinone cofactor. The protein is Putative FAD-dependent oxidoreductase LodB (lodB) of Marinomonas mediterranea (strain ATCC 700492 / JCM 21426 / NBRC 103028 / MMB-1).